The chain runs to 200 residues: Molybdopterin synthase catalytic subunit (200 aa).

Over residues 16–30 (KLPSSHQSVEDSASE) the composition is skewed to polar residues. The disordered stretch occupies residues 16–43 (KLPSSHQSVEDSASEPSGYEAKDPPQDT). Ser-20 carries the post-translational modification Phosphoserine. Substrate-binding positions include 154–155 (HR), Lys-170, and 177–179 (KKE).

This sequence belongs to the MoaE family. MOCS2B subfamily. In terms of assembly, heterotetramer; composed of 2 small (MOCS2A) and 2 large (MOCS2B) subunits.

The protein resides in the cytoplasm. Its subcellular location is the cytosol. It catalyses the reaction 2 [molybdopterin-synthase sulfur-carrier protein]-C-terminal-Gly-aminoethanethioate + cyclic pyranopterin phosphate + H2O = molybdopterin + 2 [molybdopterin-synthase sulfur-carrier protein]-C-terminal Gly-Gly + 2 H(+). It participates in cofactor biosynthesis; molybdopterin biosynthesis. Functionally, catalytic subunit of the molybdopterin synthase complex, a complex that catalyzes the conversion of precursor Z into molybdopterin. Acts by mediating the incorporation of 2 sulfur atoms from thiocarboxylated MOCS2A into precursor Z to generate a dithiolene group. The polypeptide is Molybdopterin synthase catalytic subunit (Rattus norvegicus (Rat)).